The primary structure comprises 895 residues: Putative endoplasmic reticulum metallopeptidase 1-A (895 aa).

The disordered stretch occupies residues 1-30; the sequence is MLRRRGGPNELRDELNNSKNQPEDDQRTKR. Over 1-34 the chain is Cytoplasmic; sequence MLRRRGGPNELRDELNNSKNQPEDDQRTKRGRES. The span at 10-30 shows a compositional bias: basic and acidic residues; the sequence is ELRDELNNSKNQPEDDQRTKR. The helical transmembrane segment at 35–55 threads the bilayer; the sequence is IGFRHWIYFVLTVAIVYAGVV. The Lumenal portion of the chain corresponds to 56–383; sequence ALHRKMPAVR…VVGLFTVYYS (328 aa). Residues His174 and Asp186 each coordinate Zn(2+). Glu220 (proton acceptor) is an active-site residue. Glu221, Glu247, and His323 together coordinate Zn(2+). Residues 384 to 404 form a helical membrane-spanning segment; the sequence is VNVGKLLNYIACFATYFLVVL. At 405-423 the chain is on the cytoplasmic side; that stretch reads RIRNRLYSVGDLAIAFKHH. A helical transmembrane segment spans residues 424-444; that stretch reads VVAFLAMVITMLLIIAFVVQM. Residues 445–452 are Lumenal-facing; it reads DLVMCWYK. Residues 453–473 traverse the membrane as a helical segment; it reads MPEIVGALYVLPMLIAGAIVH. Topologically, residues 474 to 492 are cytoplasmic; it reads SHYADNNRIRNVEMVQYDT. Residues 493–513 form a helical membrane-spanning segment; sequence ILLSFASILFLMTFYNLSSAF. Topologically, residues 514–517 are lumenal; the sequence is YVLN. A helical membrane pass occupies residues 518 to 538; that stretch reads NLILPVFKDIIIWALGLFGVI. The Cytoplasmic segment spans residues 539 to 544; that stretch reads RRVTPR. Residues 545–565 form a helical membrane-spanning segment; the sequence is VLFFTQLFCFLPTFVFAAYAI. The Lumenal segment spans residues 566–586; it reads SQCVDFFVPVMGRLGNAINPE. A helical membrane pass occupies residues 587–607; that stretch reads FIMGPLGLVIASGFILFVNNL. Over 608–613 the chain is Cytoplasmic; that stretch reads FYISRR. A helical transmembrane segment spans residues 614-634; the sequence is MNYIIRLLFAIFALFILVLIT. Residues 635-895 lie on the Lumenal side of the membrane; the sequence is TKVGNPYEYS…GRSEIVVKIF (261 aa). Residues Asn659, Asn702, and Asn758 are each glycosylated (N-linked (GlcNAc...) asparagine).

This sequence belongs to the peptidase M28 family. Zn(2+) is required as a cofactor.

It localises to the endoplasmic reticulum membrane. The protein is Putative endoplasmic reticulum metallopeptidase 1-A of Caenorhabditis elegans.